Consider the following 630-residue polypeptide: WD repeat-containing protein 26 homolog (630 aa).

Over residues 1–13 the composition is skewed to low complexity; sequence MQSTSSTSSGSCS. Residues 1-90 are disordered; sequence MQSTSSTSSG…NNRENTSCSG (90 aa). Phosphoserine is present on residues Ser36 and Ser40. Composition is skewed to polar residues over residues 48 to 57 and 66 to 75; these read PSGSSAATNG and IVNNNGSSSR. Residues 96–128 enclose the LisH domain; sequence SNQEIIRLIGQYLHDVGLDKSVQTLMLESGCYL. One can recognise a CTLH domain in the interval 129–190; it reads EHPSATKFRE…EHLDDGNPLD (62 aa). 7 WD repeats span residues 312–351, 359–400, 404–443, 445–482, 485–524, 529–569, and 572–612; these read DHCDEVWFCKFSPDGLKLATGSKDSTVIIWDVDPYKLTLK, QAQL…LVVK, SLEDSLACGAFSRDGARFVCGGQKGQLYLCDLNGTIVDSW, GVRVNSIAFRADNKTILAADNHYRIRGYNFDSPRSDFD, REPHPIMTFSINSADRLALLNVSNQGLHLWDIEDKCLVRR, RQSN…PLAK, and GHTK…SSAT. The segment at 604–630 is disordered; sequence PKPNGSSATTESDDCSSSSSSSSWNMT. Positions 609 to 630 are enriched in low complexity; it reads SSATTESDDCSSSSSSSSWNMT.

Its subcellular location is the cytoplasm. The protein localises to the mitochondrion. Functionally, G-beta-like protein involved in cell signal transduction. This Drosophila melanogaster (Fruit fly) protein is WD repeat-containing protein 26 homolog.